We begin with the raw amino-acid sequence, 908 residues long: Protein translocase subunit SecA (908 aa).

ATP contacts are provided by residues Q87, G105–T109, and D512. Residues D882–T908 are disordered. C892, C894, C903, and H904 together coordinate Zn(2+). The segment covering K898 to T908 has biased composition (basic residues).

Belongs to the SecA family. In terms of assembly, monomer and homodimer. Part of the essential Sec protein translocation apparatus which comprises SecA, SecYEG and auxiliary proteins SecDF-YajC and YidC. It depends on Zn(2+) as a cofactor.

The protein localises to the cell inner membrane. It localises to the cytoplasm. It catalyses the reaction ATP + H2O + cellular proteinSide 1 = ADP + phosphate + cellular proteinSide 2.. Part of the Sec protein translocase complex. Interacts with the SecYEG preprotein conducting channel. Has a central role in coupling the hydrolysis of ATP to the transfer of proteins into and across the cell membrane, serving both as a receptor for the preprotein-SecB complex and as an ATP-driven molecular motor driving the stepwise translocation of polypeptide chains across the membrane. The chain is Protein translocase subunit SecA from Shewanella amazonensis (strain ATCC BAA-1098 / SB2B).